Reading from the N-terminus, the 174-residue chain is Ferredoxin-thioredoxin reductase, variable chain, chloroplastic (174 aa).

The N-terminal 62 residues, methionine 1–cysteine 62, are a transit peptide targeting the chloroplast. Positions aspartate 69–proline 81 are enriched in low complexity. Positions aspartate 69–lysine 89 are disordered. Phosphoserine occurs at positions 70 and 71.

It belongs to the ferredoxin thioredoxin reductase alpha subunit family. As to quaternary structure, heterodimer of subunit A (variable subunit) and subunit B (catalytic subunit). Heterodimeric FTR forms a complex with ferredoxin and thioredoxin.

The protein localises to the plastid. The protein resides in the chloroplast. Functionally, variable subunit of the ferredoxin-thioredoxin reductase (FTR), which catalyzes the two-electron reduction of thioredoxins by the electrons provided by reduced ferredoxin. The chain is Ferredoxin-thioredoxin reductase, variable chain, chloroplastic (FTRV) from Spinacia oleracea (Spinach).